We begin with the raw amino-acid sequence, 182 residues long: Dual-action ribosomal maturation protein DarP (182 aa).

The tract at residues 1 to 20 (MNKQPEEWQDPQSLQQQDDE) is disordered.

The protein belongs to the DarP family.

The protein localises to the cytoplasm. In terms of biological role, member of a network of 50S ribosomal subunit biogenesis factors which assembles along the 30S-50S interface, preventing incorrect 23S rRNA structures from forming. Promotes peptidyl transferase center (PTC) maturation. This Sodalis glossinidius (strain morsitans) protein is Dual-action ribosomal maturation protein DarP.